A 763-amino-acid polypeptide reads, in one-letter code: Transferrin receptor protein 1 (763 aa).

Topologically, residues 1–67 (MMDQARSAFS…KPKRFNGRLC (67 aa)) are cytoplasmic. The interval 1 to 67 (MMDQARSAFS…KPKRFNGRLC (67 aa)) is mediates interaction with SH3BP4. A phosphoserine mark is found at serine 10 and serine 19. Tyrosine 20 carries the phosphotyrosine modification. An Endocytosis signal motif is present at residues 20 to 23 (YTRF). The residue at position 21 (threonine 21) is a Phosphothreonine. Serine 24 carries the phosphoserine modification. The short motif at 58–61 (KPKR) is the Stop-transfer sequence element. Cysteine 67 is lipidated: S-palmitoyl cysteine. The chain crosses the membrane as a helical; Signal-anchor for type II membrane protein span at residues 68–88 (FAAIALVIFFLIGFMSGYLGY). The Extracellular segment spans residues 89–763 (CKRVEQKEEC…GDIWNIDNEF (675 aa)). Threonine 104 carries an O-linked (GalNAc...) threonine glycan. A PA domain is found at 225–315 (SKPTEVSGKL…GTGDPYTPGF (91 aa)). 2 N-linked (GlcNAc...) asparagine glycosylation sites follow: asparagine 253 and asparagine 319. The tract at residues 572–763 (RLDTYEALTQ…GDIWNIDNEF (192 aa)) is ligand-binding. A Cell attachment site motif is present at residues 649–651 (RGD). 2 N-linked (GlcNAc...) asparagine glycosylation sites follow: asparagine 725 and asparagine 730.

This sequence belongs to the peptidase M28 family. M28B subfamily. In terms of assembly, homodimer; disulfide-linked. Binds one transferrin molecule per subunit. Interacts with SH3BP4. Interacts with STEAP3; facilitates TFRC endocytosis in erythroid precursor cells. In terms of processing, stearoylated by ZDHHC6 which inhibits TFRC-mediated activation of the JNK pathway and promotes mitochondrial fragmentation. Stearoylation does not affect iron uptake. N- and O-glycosylated, phosphorylated and palmitoylated.

The protein resides in the cell membrane. It is found in the melanosome. In terms of biological role, cellular uptake of iron occurs via receptor-mediated endocytosis of ligand-occupied transferrin receptor into specialized endosomes. Endosomal acidification leads to iron release. The apotransferrin-receptor complex is then recycled to the cell surface with a return to neutral pH and the concomitant loss of affinity of apotransferrin for its receptor. Transferrin receptor is necessary for development of erythrocytes and the nervous system. Upon stimulation, positively regulates T and B cell proliferation through iron uptake. Acts as a lipid sensor that regulates mitochondrial fusion by regulating activation of the JNK pathway. When dietary levels of stearate (C18:0) are low, promotes activation of the JNK pathway, resulting in HUWE1-mediated ubiquitination and subsequent degradation of the mitofusin MFN2 and inhibition of mitochondrial fusion. When dietary levels of stearate (C18:0) are high, TFRC stearoylation inhibits activation of the JNK pathway and thus degradation of the mitofusin MFN2. Mediates uptake of NICOL1 into fibroblasts where it may regulate extracellular matrix production. The polypeptide is Transferrin receptor protein 1 (Tfrc) (Mus musculus (Mouse)).